The primary structure comprises 580 residues: Pentatricopeptide repeat-containing protein At5g10690 (580 aa).

9 PPR repeats span residues 76–110 (NTIV…GGIG), 112–142 (DSIS…IEYG), 151–181 (SSSL…YDIL), 189–223 (SVLI…RLEP), 224–254 (DRLT…MKEK), 266–296 (DVVT…MKLC), 302–337 (DRTA…GANE), 342–376 (KPHL…SSGS), and 382–417 (QQEA…KTIP). One can recognise a CBS domain in the interval 486–553 (VPIVDDRGSC…IVVHCGNFSG (68 aa)).

It belongs to the PPR family. P subfamily.

The protein is Pentatricopeptide repeat-containing protein At5g10690 (CBSPPR1) of Arabidopsis thaliana (Mouse-ear cress).